The chain runs to 298 residues: Aclacinomycin methylesterase RdmC (298 aa).

The 254-residue stretch at 24–277 folds into the AB hydrolase-1 domain; sequence PALLLVMGGN…LAEIPGMGHA (254 aa). Catalysis depends on residues S102, D248, and H276.

The protein belongs to the AB hydrolase superfamily. Hydrolase RdmC family. As to quaternary structure, monomer.

The enzyme catalyses aclacinomycin T + H2O = 15-demethylaclacinomycin T + methanol. The protein operates within antibiotic biosynthesis; aclacinomycin biosynthesis. In terms of biological role, involved in the biosynthesis of the anthracycline aclacinomycin which is an aromatic polyketide antibiotic that exhibits high cytotoxicity and is widely applied in the chemotherapy of a variety of cancers. Catalyzes the removal of the methoxy group from the C-15 position of aclacinomycin T and A to yield 15-demethoxyaclacinomycin T and A, respectively. In Streptomyces purpurascens, this protein is Aclacinomycin methylesterase RdmC (rdmC).